We begin with the raw amino-acid sequence, 295 residues long: UDP-N-acetylenolpyruvoylglucosamine reductase (295 aa).

The FAD-binding PCMH-type domain maps to 23-188 (KVGGPADFLA…ISAKFALKPG (166 aa)). R167 is a catalytic residue. S217 acts as the Proton donor in catalysis. E287 is an active-site residue.

The protein belongs to the MurB family. The cofactor is FAD.

It is found in the cytoplasm. It carries out the reaction UDP-N-acetyl-alpha-D-muramate + NADP(+) = UDP-N-acetyl-3-O-(1-carboxyvinyl)-alpha-D-glucosamine + NADPH + H(+). It participates in cell wall biogenesis; peptidoglycan biosynthesis. Functionally, cell wall formation. The sequence is that of UDP-N-acetylenolpyruvoylglucosamine reductase from Streptococcus pyogenes serotype M49 (strain NZ131).